The following is a 513-amino-acid chain: Putative zinc finger CCCH domain-containing protein 51 (513 aa).

Positions 155–180 (SMPRNSPNAGRNLVGHPHSSSKSSSK) are disordered. Low complexity predominate over residues 170–180 (HPHSSSKSSSK). The segment at 176–204 (KSSSKPCHFHFFRGYCKKGVNCQFFHGSV) adopts a C3H1-type zinc-finger fold. An HTH OST-type domain is found at 218–299 (SLSKLDMEIR…HGQYHVVLVE (82 aa)). In terms of domain architecture, RRM spans 325–411 (NQIYMTFPVH…SELRMTWLKS (87 aa)).

This Oryza sativa subsp. japonica (Rice) protein is Putative zinc finger CCCH domain-containing protein 51.